A 455-amino-acid polypeptide reads, in one-letter code: Chromosomal replication initiator protein DnaA (455 aa).

A domain I, interacts with DnaA modulators region spans residues methionine 1 to aspartate 77. The interval aspartate 77–serine 116 is domain II. A domain III, AAA+ region region spans residues glycine 117–alanine 333. Residues glycine 161, glycine 163, lysine 164, and threonine 165 each contribute to the ATP site. The segment at arginine 334 to phenylalanine 455 is domain IV, binds dsDNA.

This sequence belongs to the DnaA family. As to quaternary structure, oligomerizes as a right-handed, spiral filament on DNA at oriC.

The protein resides in the cytoplasm. In terms of biological role, plays an essential role in the initiation and regulation of chromosomal replication. ATP-DnaA binds to the origin of replication (oriC) to initiate formation of the DNA replication initiation complex once per cell cycle. Binds the DnaA box (a 9 base pair repeat at the origin) and separates the double-stranded (ds)DNA. Forms a right-handed helical filament on oriC DNA; dsDNA binds to the exterior of the filament while single-stranded (ss)DNA is stabiized in the filament's interior. The ATP-DnaA-oriC complex binds and stabilizes one strand of the AT-rich DNA unwinding element (DUE), permitting loading of DNA polymerase. After initiation quickly degrades to an ADP-DnaA complex that is not apt for DNA replication. Binds acidic phospholipids. The polypeptide is Chromosomal replication initiator protein DnaA (Lactococcus lactis subsp. lactis (strain IL1403) (Streptococcus lactis)).